We begin with the raw amino-acid sequence, 514 residues long: H/ACA ribonucleoprotein complex subunit DKC1 (514 aa).

N-acetylalanine is present on A2. The nucleolar localization stretch occupies residues 2-21; that stretch reads ADAEVIILPKKHKKKKERKS. A Glycyl lysine isopeptide (Lys-Gly) (interchain with G-Cter in SUMO2) cross-link involves residue K20. At S21 the chain carries Phosphoserine. Residues K39 and K43 each participate in a glycyl lysine isopeptide (Lys-Gly) (interchain with G-Cter in SUMO2) cross-link. D125 acts as the Nucleophile in catalysis. A Glycyl lysine isopeptide (Lys-Gly) (interchain with G-Cter in SUMO2) cross-link involves residue K191. The region spanning 296–371 is the PUA domain; that stretch reads HKRLVMKDSA…IVAKIKRVIM (76 aa). S387 carries the post-translational modification Phosphoserine. K394 participates in a covalent cross-link: Glycyl lysine isopeptide (Lys-Gly) (interchain with G-Cter in SUMO2). A Glycyl lysine isopeptide (Lys-Gly) (interchain with G-Cter in SUMO1); alternate cross-link involves residue K413. K413 participates in a covalent cross-link: Glycyl lysine isopeptide (Lys-Gly) (interchain with G-Cter in SUMO2); alternate. Glycyl lysine isopeptide (Lys-Gly) (interchain with G-Cter in SUMO2) cross-links involve residues K424 and K433. Residues 443–514 are disordered; sequence KTAKRKRESE…KAKEVELVSE (72 aa). The segment at 446 to 514 is nuclear and nucleolar localization; that stretch reads KRKRESESES…KAKEVELVSE (69 aa). Phosphoserine is present on residues S451, S453, and S455. A Phosphothreonine modification is found at T458. K467 participates in a covalent cross-link: Glycyl lysine isopeptide (Lys-Gly) (interchain with G-Cter in SUMO2). A compositionally biased stretch (basic residues) spans 468 to 480; that stretch reads KEKKKSKKDKKAK. S485, S494, and S513 each carry phosphoserine.

Belongs to the pseudouridine synthase TruB family. In terms of assembly, part of the H/ACA small nucleolar ribonucleoprotein (H/ACA snoRNP) complex, which contains NHP2/NOLA2, GAR1/NOLA1, NOP10/NOLA3, and DKC1/NOLA4, which is presumed to be the catalytic subunit. The complex contains a stable core formed by binding of one or two NOP10-DKC1 heterodimers to NHP2; GAR1 subsequently binds to this core via DKC1. The complex binds a box H/ACA small nucleolar RNA (snoRNA), which may target the specific site of modification within the RNA substrate. During assembly, the complex contains NAF1 instead of GAR1/NOLA1. The complex also interacts with TERC, which contains a 3'-terminal domain related to the box H/ACA snoRNAs. Specific interactions with snoRNAs or TERC are mediated by GAR1 and NHP2. Associates with NOLC1/NOPP140. H/ACA snoRNPs interact with the SMN complex, consisting of SMN1 or SMN2, GEMIN2/SIP1, DDX20/GEMIN3, and GEMIN4. This is mediated by interaction between GAR1 and SMN1 or SMN2. The SMN complex may be required for correct assembly of the H/ACA snoRNP complex. Component of the telomerase holoenzyme complex composed of one molecule of TERT, one molecule of WRAP53/TCAB1, two molecules of H/ACA ribonucleoprotein complex subunits DKC1, NOP10, NHP2 and GAR1, and a telomerase RNA template component (TERC). The telomerase holoenzyme complex is associated with TEP1, SMG6/EST1A and POT1. Interacts with SHQ1; this interaction may lead to the stabilization of DKC1, from the time of its synthesis until its association with NOP10, NHP2, and NAF1 at the nascent H/ACA RNA. Interacts with HMBOX1. Interacts with DHX36. Ubiquitously expressed.

Its subcellular location is the nucleus. The protein localises to the nucleolus. The protein resides in the cajal body. It is found in the cytoplasm. The enzyme catalyses uridine in 5S rRNA = pseudouridine in 5S rRNA. Functionally, catalytic subunit of H/ACA small nucleolar ribonucleoprotein (H/ACA snoRNP) complex, which catalyzes pseudouridylation of rRNA. This involves the isomerization of uridine such that the ribose is subsequently attached to C5, instead of the normal N1. Each rRNA can contain up to 100 pseudouridine ('psi') residues, which may serve to stabilize the conformation of rRNAs. Required for ribosome biogenesis and telomere maintenance. Also required for correct processing or intranuclear trafficking of TERC, the RNA component of the telomerase reverse transcriptase (TERT) holoenzyme. In terms of biological role, promotes cell to cell and cell to substratum adhesion, increases the cell proliferation rate and leads to cytokeratin hyper-expression. The protein is H/ACA ribonucleoprotein complex subunit DKC1 of Homo sapiens (Human).